The sequence spans 572 residues: Protein IQ-DOMAIN 30 (572 aa).

Residues 75–96 (SDDEIQVSEVQPTDSQDVASVP) are disordered. The segment covering 82 to 92 (SEVQPTDSQDV) has biased composition (polar residues). IQ domains are found at residues 108–136 (QEIA…GIIR) and 137–154 (LQAL…VSTL). Positions 159–178 (GIVRLQALARGREIRHSDIG) are calmodulin-binding. Disordered regions lie at residues 282–332 (RPKK…MDNP) and 399–572 (IQTH…EWKR). 2 stretches are compositionally biased toward polar residues: residues 291-305 (PSSN…QTSS) and 400-419 (QTHT…VNQI). The segment covering 428 to 455 (AEEKEDVKEERTPKQNHKENSAGKENQK) has biased composition (basic and acidic residues). Composition is skewed to polar residues over residues 459 to 493 (KASS…QATK), 502 to 514 (QGSS…GTTE), and 522 to 560 (LPSS…SSRE).

It belongs to the IQD family. Binds to multiple calmodulin (CaM) in the presence of Ca(2+) and CaM-like proteins.

The protein resides in the nucleus envelope. Its subcellular location is the cytoplasm. It is found in the cytoskeleton. Its function is as follows. May be involved in cooperative interactions with calmodulins or calmodulin-like proteins. Recruits calmodulin proteins to microtubules, thus being a potential scaffold in cellular signaling and trafficking. May associate with nucleic acids and regulate gene expression at the transcriptional or post-transcriptional level. The polypeptide is Protein IQ-DOMAIN 30 (Arabidopsis thaliana (Mouse-ear cress)).